A 680-amino-acid chain; its full sequence is 1-deoxy-D-xylulose-5-phosphate synthase (680 aa).

Residues 1–17 (MQQSPHSPQSQSLSASA) show a composition bias toward low complexity. The disordered stretch occupies residues 1–20 (MQQSPHSPQSQSLSASAVDS). Thiamine diphosphate is bound by residues His113 and 154–156 (GHS). Position 185 (Asp185) interacts with Mg(2+). Residues 186–187 (GA), Asn214, Phe323, and Glu408 contribute to the thiamine diphosphate site. Asn214 is a Mg(2+) binding site.

The protein belongs to the transketolase family. DXPS subfamily. In terms of assembly, homodimer. The cofactor is Mg(2+). Thiamine diphosphate is required as a cofactor.

The enzyme catalyses D-glyceraldehyde 3-phosphate + pyruvate + H(+) = 1-deoxy-D-xylulose 5-phosphate + CO2. It participates in metabolic intermediate biosynthesis; 1-deoxy-D-xylulose 5-phosphate biosynthesis; 1-deoxy-D-xylulose 5-phosphate from D-glyceraldehyde 3-phosphate and pyruvate: step 1/1. Its function is as follows. Catalyzes the acyloin condensation reaction between C atoms 2 and 3 of pyruvate and glyceraldehyde 3-phosphate to yield 1-deoxy-D-xylulose-5-phosphate (DXP). In Psychrobacter cryohalolentis (strain ATCC BAA-1226 / DSM 17306 / VKM B-2378 / K5), this protein is 1-deoxy-D-xylulose-5-phosphate synthase.